A 451-amino-acid chain; its full sequence is MPREIITLQLGQCGNQIGFEFWKQLCAEHGISPEGIVEEFATEGTDRKDVFFYQADDEHYIPRAVLLDLEPRVIHSILNSPYAKLYNPENIYLSEHGGGAGNNWASGFSQGEKIHEDIFDIIDREADGSDSLEGFVLCHSIAGGTGSGLGSYLLERLNDRYPKKLVQTYSVFPNQDEMSDVVVQPYNSLLTLKRLTQNADCVVVLDNTALNRIATDRLHIQNPSFSQINQLVSTIMSASTTTLRYPGYMNNDLIGLIASLIPTPRLHFLMTGYTPLTTDQSVASVRKTTVLDVMRRLLQPKNVMVSTGRDRQTNHCYIAILNIIQGEVDPTQVHKSLQRIRERKLANFIPWGPASIQVALSRKSPYLPSAHRVSGLMMANHTSISSLFESSCQQYDKLRKREAFLEQFRKEDIFKDNFDELDRSREVVQELIDEYHAATRPDYISWGTQEQ.

A Phosphoserine; by BRSK1 modification is found at serine 131. 142 to 148 (AGGTGSG) is a GTP binding site.

The protein belongs to the tubulin family. Component of the gamma-tubulin ring complex (gTuRC) consisting of TUBGCP2, TUBGCP3, TUBGCP4, TUBGCP5 and TUBGCP6 and gamma-tubulin TUBG1 or TUBG2. TUBGCP2, TUBGCP3, TUBGCP4, TUBGCP5 and TUBGCP6 assemble in a 5:5:2:1:1 stoichiometry; each is associated with a gamma-tubulin, thereby arranging 14 gamma-tubulins in a helical manner. Gamma-tubulin at the first position is blocked by TUBGCP3 at the last position, allowing 13 protafilaments to grow into a microtubule. Interacts with alpha-beta tubulin heterodimers; the interaction allows microtubules to nucleate from the gTuRC. Post-translationally, phosphorylation at Ser-131 by BRSK1 regulates centrosome duplication, possibly by mediating relocation of gamma-tubulin and its associated proteins from the cytoplasm to the centrosome.

It is found in the cytoplasm. The protein localises to the cytoskeleton. Its subcellular location is the microtubule organizing center. The protein resides in the centrosome. Its function is as follows. Tubulin is the major constituent of microtubules, protein filaments consisting of alpha- and beta-tubulin heterodimers. Gamma-tubulin is a key component of the gamma-tubulin ring complex (gTuRC) which mediates microtubule nucleation. The gTuRC regulates the minus-end nucleation of alpha-beta tubulin heterodimers that grow into microtubule protafilaments, a critical step in centrosome duplication and spindle formation. The protein is Tubulin gamma-2 chain (TUBG2) of Bos taurus (Bovine).